The following is a 97-amino-acid chain: Ice-structuring protein (97 aa).

The signal sequence occupies residues M1–A23. A propeptide spans N24–A48 (removed by a dipeptidylpeptidase).

The protein belongs to the type-I AFP family. Detected in blood serum (at protein level).

Its subcellular location is the secreted. Its function is as follows. Contributes to protect fish blood from freezing at subzero sea water temperatures. Lowers the blood freezing point. Binds to nascent ice crystals and prevents further growth. The sequence is that of Ice-structuring protein from Myzopsetta ferruginea (Yellowtail flounder).